A 525-amino-acid chain; its full sequence is MMGKGFLDCESLVALQEMALHPIDLTASGCLSEERIQKNSLSVEGFTYSYATERVDDRCLEALQGLTEERELIKQMECMQQGAIMNRIEGFQSESRPVLHTATRAWVRDQDLHEEAAAIARHSKEEALRLAEFLYIARAKFSTLVQIGIGGSELGPKAMYFAMQGSCPSDKRIFFVSNIDPDNAAEVLREIDLEQTLVVVVSKSGTTLEPAANEELFRQAYQNKGLSIAEHFVAVTSQGSPMDDKSRYLEVFHLWDSIGGRFSATSMVGGVVLGFAFGYEAFIEFLQGAAAIDAHALTPKMRENLPLLSAMLGVWNRNLLGYPTTAVIPYSTGLKYFTAHLQQCGMESNGKSISREGKEISFRTSPIIWGDVGTNCQHSFFQSLHQGTDIVPVEFIGFLHNQRGLDCVLSGSSSSQKLFANLVAQSLALAQGRDNANPNKRFKGNSPSSILVAQQLSPRIAGSLLAFYEHKFAFQGFCWGINSFDQEGVSLGKELATQIIGIMSGNAPVEFPEARGVLRLFNVLT.

Residue Glu347 is the Proton donor of the active site. Catalysis depends on residues His378 and Lys493.

It belongs to the GPI family.

The protein resides in the cytoplasm. The enzyme catalyses alpha-D-glucose 6-phosphate = beta-D-fructose 6-phosphate. Its pathway is carbohydrate biosynthesis; gluconeogenesis. It participates in carbohydrate degradation; glycolysis; D-glyceraldehyde 3-phosphate and glycerone phosphate from D-glucose: step 2/4. In terms of biological role, catalyzes the reversible isomerization of glucose-6-phosphate to fructose-6-phosphate. This chain is Glucose-6-phosphate isomerase, found in Chlamydia trachomatis serovar L2 (strain ATCC VR-902B / DSM 19102 / 434/Bu).